The sequence spans 283 residues: Glutamate racemase (283 aa).

Substrate-binding positions include 28-29 (DS) and 60-61 (YG). Cysteine 92 (proton donor/acceptor) is an active-site residue. 93–94 (NT) contributes to the substrate binding site. Catalysis depends on cysteine 204, which acts as the Proton donor/acceptor. 205–206 (TH) is a substrate binding site.

The protein belongs to the aspartate/glutamate racemases family.

It carries out the reaction L-glutamate = D-glutamate. Its pathway is cell wall biogenesis; peptidoglycan biosynthesis. In terms of biological role, provides the (R)-glutamate required for cell wall biosynthesis. The chain is Glutamate racemase from Klebsiella pneumoniae (strain 342).